A 206-amino-acid chain; its full sequence is Reticulon-like protein B13 (206 aa).

Residues 16-206 (VEDIYLWRRK…GTEEKVKKSE (191 aa)) enclose the Reticulon domain. 3 helical membrane-spanning segments follow: residues 27 to 47 (LAFSTLLVSTSTWILLSFYGF), 50 to 70 (ITIVSWIGIAVVSMIFLWGSL), and 134 to 154 (IGNLLDFHTCLFIGLVMGLTV).

The protein resides in the endoplasmic reticulum membrane. This chain is Reticulon-like protein B13 (RTNLB13), found in Arabidopsis thaliana (Mouse-ear cress).